The sequence spans 287 residues: Putative ABC transporter ATP-binding protein MM_1038 (287 aa).

An ABC transporter domain is found at 5–238 (LENISVFYSR…ENVPLPPVAS (234 aa)). 40-47 (GEKGAGKS) lines the ATP pocket.

This sequence belongs to the ABC transporter superfamily.

The protein resides in the cell membrane. Its function is as follows. Probably part of an ABC transporter complex. Responsible for energy coupling to the transport system. This chain is Putative ABC transporter ATP-binding protein MM_1038, found in Methanosarcina mazei (strain ATCC BAA-159 / DSM 3647 / Goe1 / Go1 / JCM 11833 / OCM 88) (Methanosarcina frisia).